A 689-amino-acid polypeptide reads, in one-letter code: Dipeptidyl aminopeptidase BIII (689 aa).

The N-terminal stretch at Met-1 to Ala-26 is a signal peptide. Catalysis depends on charge relay system residues Ser-506, Asp-593, and His-625.

This sequence belongs to the peptidase S9C family. In terms of assembly, monomer.

With respect to regulation, strongly inhibited by the serine protease inhibitor diisopropyl fluorophosphate (DFP), chymostatin, leupeptin, 0.5 mM ZnCl(2), 10 mM o-phenanthlorine and N-tosyl-L-phenyl-alanyl chloromethyl ketone (TPCK), but not by N-tosyl-L-lysyl chloromethyl ketone (TLCK). Activity is not affected significantly by iodoacetate (IAA), L-trans-epoxysuccinyl-leucylamido(4-guanido)butane (E64), pepstatin A and phenylmethanesulfonyl fluoride (PMSF). Activity is stimulated by addition of 0.5 mM CaCl(2), 10 mM EDTA and N-ethylmaleimide (NEM). Its function is as follows. Exopeptidase that catalyzes the removal of dipeptide units (NH2-P2-P1- or -P1'-P2'-COOH) from the free amino or carboxy termini. Prefers substrates composed of bulky, hydrophobic amino acids at P1 and P1' positions. Has endopeptidase activity on N-terminally blocked peptide derivatives which contain aromatic amino acid residue at the P1 position. Exopeptidase activity is much higher than its endopeptidase activity. The chain is Dipeptidyl aminopeptidase BIII from Pseudoxanthomonas mexicana.